Reading from the N-terminus, the 77-residue chain is MKEQKWIHEGLITESLPNGMFRIRLDNQDMILGYVSGKIRRSFIRILPGDRVKIEVSRYDSTRGRIIYRLRNKDSKD.

The 71-residue stretch at 1–71 (MKEQKWIHEG…TRGRIIYRLR (71 aa)) folds into the S1-like domain.

The protein belongs to the IF-1 family. As to quaternary structure, component of the 30S ribosomal translation pre-initiation complex which assembles on the 30S ribosome in the order IF-2 and IF-3, IF-1 and N-formylmethionyl-tRNA(fMet); mRNA recruitment can occur at any time during PIC assembly.

It localises to the plastid. Its subcellular location is the chloroplast. In terms of biological role, one of the essential components for the initiation of protein synthesis. Stabilizes the binding of IF-2 and IF-3 on the 30S subunit to which N-formylmethionyl-tRNA(fMet) subsequently binds. Helps modulate mRNA selection, yielding the 30S pre-initiation complex (PIC). Upon addition of the 50S ribosomal subunit IF-1, IF-2 and IF-3 are released leaving the mature 70S translation initiation complex. In Daucus carota (Wild carrot), this protein is Translation initiation factor IF-1, chloroplastic.